We begin with the raw amino-acid sequence, 274 residues long: MRDPDALLVRAGVRGDPERDQHFLIDDRVLDRLPGYLPDSADTDHVLEIGGGTGALTDRLLDVADRVTVIERDPGLATFLTDEFADEIEAGSLTVIEGDALEVPLPDFTASVSNLPYGVSSEIAFRLLPEKRPLVLMFQQEFAERMAAEPGTDEYGRLSVTAGHYADVEVVEPVPKEAFSPPPAVESAVVRTTPREPPYEVPDDELFMRLVRAVFTQRRKTMRNAVRNTTHISGIEDAEAVVEAAGEDLMSKRAGNVPPEAFARLAAIAAEVDG.

6 residues coordinate S-adenosyl-L-methionine: His-22, Leu-24, Gly-50, Glu-71, Asp-99, and Asn-114.

It belongs to the class I-like SAM-binding methyltransferase superfamily. rRNA adenine N(6)-methyltransferase family. RsmA subfamily.

The protein resides in the cytoplasm. Specifically dimethylates two adjacent adenosines in the loop of a conserved hairpin near the 3'-end of 16S rRNA in the 30S particle. May play a critical role in biogenesis of 30S subunits. The polypeptide is Probable ribosomal RNA small subunit methyltransferase A (Natronomonas pharaonis (strain ATCC 35678 / DSM 2160 / CIP 103997 / JCM 8858 / NBRC 14720 / NCIMB 2260 / Gabara) (Halobacterium pharaonis)).